Here is a 339-residue protein sequence, read N- to C-terminus: FR-33289 synthase (339 aa).

Positions 150, 152, and 288 each coordinate Fe(2+).

It belongs to the TfdA dioxygenase family. In terms of assembly, homodimer. It depends on Fe(2+) as a cofactor.

The enzyme catalyses 3-(N-acetyl-N-hydroxy)aminopropylphosphonate + 2-oxoglutarate + O2 = (R)-(3-(acetylhydroxyamino)-2-hydroxypropyl)phosphonate + succinate + CO2. Its pathway is antibiotic biosynthesis. Its function is as follows. Monooxygenase involved in the biosynthesis of the phosphonate antibiotic FR-33289, an antimalarial agent. Catalyzes the oxidative decarboxylation of the antibiotic FR-900098 (3-(N-acetyl-N-hydroxy)aminopropylphosphonate) to form FR-33289 ((R)-(3-(acetylhydroxyamino)-2-hydroxypropyl)phosphonate). This chain is FR-33289 synthase, found in Streptomyces rubellomurinus (strain ATCC 31215).